The primary structure comprises 420 residues: Gamma-glutamyl phosphate reductase 2 (420 aa).

It belongs to the gamma-glutamyl phosphate reductase family.

It is found in the cytoplasm. The catalysed reaction is L-glutamate 5-semialdehyde + phosphate + NADP(+) = L-glutamyl 5-phosphate + NADPH + H(+). Its pathway is amino-acid biosynthesis; L-proline biosynthesis; L-glutamate 5-semialdehyde from L-glutamate: step 2/2. Its function is as follows. Catalyzes the NADPH-dependent reduction of L-glutamate 5-phosphate into L-glutamate 5-semialdehyde and phosphate. The product spontaneously undergoes cyclization to form 1-pyrroline-5-carboxylate. In Synechocystis sp. (strain ATCC 27184 / PCC 6803 / Kazusa), this protein is Gamma-glutamyl phosphate reductase 2.